Here is a 146-residue protein sequence, read N- to C-terminus: Anti-sigma F factor (146 aa).

The protein belongs to the anti-sigma-factor family.

It carries out the reaction L-seryl-[protein] + ATP = O-phospho-L-seryl-[protein] + ADP + H(+). The enzyme catalyses L-threonyl-[protein] + ATP = O-phospho-L-threonyl-[protein] + ADP + H(+). In terms of biological role, binds to sigma F and blocks its ability to form an RNA polymerase holoenzyme (E-sigma F). Phosphorylates SpoIIAA on a serine residue. This phosphorylation may enable SpoIIAA to act as an anti-anti-sigma factor that counteracts SpoIIAB and thus releases sigma F from inhibition. This Anoxybacillus flavithermus (strain DSM 21510 / WK1) protein is Anti-sigma F factor.